Consider the following 425-residue polypeptide: MNIFIKGGRVIDPSQNIDETLDLLVVAGRIKELGKGLKAPADAEVIDAAGLLVTPGLIDMHVHLRDPGLEYKEDVITGTMAAAAGGFTSVACMPNTKPVNDNKAITSYIVNKAKAEALVNVFPVGAITQGSKGENLAEMGELKEAGCVAVSDDGRPVVNAELMRRALEYAKGMGVMVIAHSEELALVGEGVMNEGFTATELGLKGIPWAAEDVAVARDVYLAEFTNSPIHIAHISTKGSVRIIRDAKARGVQVTCETAPHYFSLTDDAVRGYETNAKMNPPLREAEDVAAIKTGLADGTIDAIATDHAPHHLDEKDVEFNVALNGIIGLETSLPLSLKLVEEKVLDMKTLVEKMAVRPAQILGLDRGTLKTGAPADVTIIDPKAEWVVEAEKLASKSKNSPFLGRKMTGAAAYTIVDGKVVHKRD.

Zn(2+)-binding residues include histidine 61 and histidine 63. Residues 63-65 and asparagine 95 contribute to the substrate site; that span reads HLR. Residues aspartate 153, histidine 180, and histidine 233 each contribute to the Zn(2+) site. Asparagine 279 is a substrate binding site. Aspartate 306 contacts Zn(2+). Aspartate 306 is a catalytic residue. Position 310 (histidine 310) interacts with substrate.

It belongs to the metallo-dependent hydrolases superfamily. DHOase family. Class I DHOase subfamily. The cofactor is Zn(2+).

It carries out the reaction (S)-dihydroorotate + H2O = N-carbamoyl-L-aspartate + H(+). It participates in pyrimidine metabolism; UMP biosynthesis via de novo pathway; (S)-dihydroorotate from bicarbonate: step 3/3. Functionally, catalyzes the reversible cyclization of carbamoyl aspartate to dihydroorotate. The sequence is that of Dihydroorotase from Geotalea daltonii (strain DSM 22248 / JCM 15807 / FRC-32) (Geobacter daltonii).